Consider the following 230-residue polypeptide: Triosephosphate isomerase (230 aa).

9–11 (NYK) is a substrate binding site. Catalysis depends on His-93, which acts as the Electrophile. Catalysis depends on Glu-141, which acts as the Proton acceptor. Substrate contacts are provided by residues Ile-146, Gly-180, and 201–202 (AS).

Belongs to the triosephosphate isomerase family. Homotetramer; dimer of dimers.

The protein resides in the cytoplasm. The enzyme catalyses D-glyceraldehyde 3-phosphate = dihydroxyacetone phosphate. It functions in the pathway carbohydrate biosynthesis; gluconeogenesis. Its pathway is carbohydrate degradation; glycolysis; D-glyceraldehyde 3-phosphate from glycerone phosphate: step 1/1. Its function is as follows. Involved in the gluconeogenesis. Catalyzes stereospecifically the conversion of dihydroxyacetone phosphate (DHAP) to D-glyceraldehyde-3-phosphate (G3P). This is Triosephosphate isomerase from Sulfolobus acidocaldarius (strain ATCC 33909 / DSM 639 / JCM 8929 / NBRC 15157 / NCIMB 11770).